A 294-amino-acid polypeptide reads, in one-letter code: Nucleotide-binding protein CLJ_B3680 (294 aa).

Position 8 to 15 (8 to 15 (GLSGAGKT)) interacts with ATP. 59-62 (DIRG) provides a ligand contact to GTP.

It belongs to the RapZ-like family.

In terms of biological role, displays ATPase and GTPase activities. This is Nucleotide-binding protein CLJ_B3680 from Clostridium botulinum (strain 657 / Type Ba4).